The following is a 1016-amino-acid chain: Primary septum glucan endo-1,3-beta-D-glucosidase (1016 aa).

An N-terminal signal peptide occupies residues 1 to 20; the sequence is MSSYLRSFIFGLLTISLAQC. An N-linked (GlcNAc...) asparagine glycan is attached at Asn37. The segment at 45–272 is beta-sandwich subdomain; sequence TNVFDSVVDT…NGYIQIAKIP (228 aa). Positions 45–741 constitute a GH81 domain; that stretch reads TNVFDSVVDT…AYAAGLWAND (697 aa). The alpha/beta subdomain stretch occupies residues 273-364; it reads LGDGTAEALY…AGNSITFAEA (92 aa). The (alpha/beta)6 barrel subdomain stretch occupies residues 379–741; sequence GQIGYSEEAL…AYAAGLWAND (363 aa). The active site involves Asp492. (1,3-beta-D-glucosyl)n contacts are provided by His496, Asp567, Glu569, Glu573, and Tyr650. Residues Glu569 and Glu573 contribute to the active site. A required for catalytic activity against insoluble beta-glucan and to restrict localization of the enzyme to the cell septum region spans residues 748–1016; that stretch reads SSSSTTTTST…GCSNGALVAA (269 aa). The tract at residues 844-872 is disordered; that stretch reads SSTTSSITPTPTTTSSITPTPTTTSTTTT.

The protein belongs to the glycosyl hydrolase 81 family.

It localises to the cell septum. It carries out the reaction Hydrolysis of (1-&gt;3)-beta-D-glucosidic linkages in (1-&gt;3)-beta-D-glucans.. Its function is as follows. Cleaves internal linkages in 1,3-beta-glucan. Has a role in cell separation where it is required for the degradation of the primary septum after completion of cytokinesis. The sequence is that of Primary septum glucan endo-1,3-beta-D-glucosidase from Schizosaccharomyces pombe (strain 972 / ATCC 24843) (Fission yeast).